We begin with the raw amino-acid sequence, 84 residues long: Small ribosomal subunit protein bS20 (84 aa).

Residues 62-72 are compositionally biased toward basic residues; the sequence is KNKARRLKSRA. Positions 62–84 are disordered; sequence KNKARRLKSRAARWSNSATAASR. A compositionally biased stretch (polar residues) spans 75–84; sequence WSNSATAASR.

The protein belongs to the bacterial ribosomal protein bS20 family.

Binds directly to 16S ribosomal RNA. The protein is Small ribosomal subunit protein bS20 of Mycoplasmoides gallisepticum (strain R(low / passage 15 / clone 2)) (Mycoplasma gallisepticum).